Consider the following 192-residue polypeptide: dTTP/UTP pyrophosphatase (192 aa).

The active-site Proton acceptor is Asp65.

Belongs to the Maf family. YhdE subfamily. A divalent metal cation serves as cofactor.

It localises to the cytoplasm. The catalysed reaction is dTTP + H2O = dTMP + diphosphate + H(+). It carries out the reaction UTP + H2O = UMP + diphosphate + H(+). Its function is as follows. Nucleoside triphosphate pyrophosphatase that hydrolyzes dTTP and UTP. May have a dual role in cell division arrest and in preventing the incorporation of modified nucleotides into cellular nucleic acids. This chain is dTTP/UTP pyrophosphatase, found in Fusobacterium nucleatum subsp. nucleatum (strain ATCC 25586 / DSM 15643 / BCRC 10681 / CIP 101130 / JCM 8532 / KCTC 2640 / LMG 13131 / VPI 4355).